Reading from the N-terminus, the 434-residue chain is MESKNFKLPSPLATVIVGTQFGDEGKGKLVDYLSANYDIVVRYQGGANAGHTICFDGKSVVLHLVPSGIFHEGCTCVIGNGVVIDPVALLEEIKTVENLGYDVRGRLFISHNAHLIMPYHKLLDSLHESAQGDQKIGTTGRGIGPSYEDKVARKGIRVVDLLNPELLKEKLRENLSAKNKLLRNIYDREEIDVEAMVQEYEEFDKIIDPYVTNTQAYLTRELQAGKTVLLEGAQGCLLDVDHGTYPYVTSSNPTSGGACTGSGIAPNYIGKVIGITKAYMTRVGNGAFPTELLDETGELLGKIGHEFGATTGRKRRCGWLDLVALRYSLAINGVTEIALTKLDVLDSFEEIKVCTAYLLDGKELHDFPTDHQTLAQVTPVYTTLKGWMASNAAARTFEEMQLEAQRYVDFLEEQVQLPVTFISVGPGRDETVFR.

Residues 22–28 (GDEGKGK) and 50–52 (GHT) each bind GTP. Catalysis depends on D23, which acts as the Proton acceptor. The Mg(2+) site is built by D23 and G50. Residues 23-26 (DEGK), 48-51 (NAGH), T139, R153, Q234, T249, and R313 each bind IMP. H51 acts as the Proton donor in catalysis. A substrate-binding site is contributed by 309–315 (ATTGRKR). GTP contacts are provided by residues R315, 341 to 343 (KLD), and 423 to 425 (SVG).

This sequence belongs to the adenylosuccinate synthetase family. As to quaternary structure, homodimer. Mg(2+) serves as cofactor.

Its subcellular location is the cytoplasm. The enzyme catalyses IMP + L-aspartate + GTP = N(6)-(1,2-dicarboxyethyl)-AMP + GDP + phosphate + 2 H(+). It participates in purine metabolism; AMP biosynthesis via de novo pathway; AMP from IMP: step 1/2. In terms of biological role, plays an important role in the de novo pathway of purine nucleotide biosynthesis. Catalyzes the first committed step in the biosynthesis of AMP from IMP. In Chlorobium chlorochromatii (strain CaD3), this protein is Adenylosuccinate synthetase.